We begin with the raw amino-acid sequence, 132 residues long: Small ribosomal subunit protein uS8 (132 aa).

The protein belongs to the universal ribosomal protein uS8 family. In terms of assembly, part of the 30S ribosomal subunit. Contacts proteins S5 and S12.

One of the primary rRNA binding proteins, it binds directly to 16S rRNA central domain where it helps coordinate assembly of the platform of the 30S subunit. This Stenotrophomonas maltophilia (strain R551-3) protein is Small ribosomal subunit protein uS8.